We begin with the raw amino-acid sequence, 492 residues long: MKKAILSVSNKAGIVTFGQSLIEQNYELYSTGGTMRELANGGLPVKSISELTEFEEIMDGRVKTLHPSVHGGILADRDKPEHLEQLQAQGIDLIDMVVVNLYPFKETVANPNVTEEDAIENIDIGGPTMLRAAAKNFKHVITVVHPADYNEVIDKLKNGTLDEAYRKSLMIKVFEHTNEYDAAIVDYFKDNKESLRYGENPQQSAYFVRTSDAKHTLAGAKQLHGKQLSYNNIKDADAALSLVKQFEQPAAVAVKHMNPCGVGVAETIDEAYKHAFDADNQSIFGGIVALNRTVEKSLAEVLHGIFLEVVIAPKFTQEALEVLGKKKNIRLLEIDMTIDNSEQELVSVSGGYLVQDKDNVKLNREDMTVVTEVEPTEAQWDAMLLGWKVVASVKSNAVILSNAKQTVGIGAGQMNRVGSAQIAIERAIEINDDVAMVSDGFFPMDDTVELAANSGIKAIIQPGGSIKDQESIDMANKHGIAMVTTGVRHFKH.

The MGS-like domain maps to 1 to 144 (MKKAILSVSN…KNFKHVITVV (144 aa)).

The protein belongs to the PurH family.

The enzyme catalyses (6R)-10-formyltetrahydrofolate + 5-amino-1-(5-phospho-beta-D-ribosyl)imidazole-4-carboxamide = 5-formamido-1-(5-phospho-D-ribosyl)imidazole-4-carboxamide + (6S)-5,6,7,8-tetrahydrofolate. The catalysed reaction is IMP + H2O = 5-formamido-1-(5-phospho-D-ribosyl)imidazole-4-carboxamide. It functions in the pathway purine metabolism; IMP biosynthesis via de novo pathway; 5-formamido-1-(5-phospho-D-ribosyl)imidazole-4-carboxamide from 5-amino-1-(5-phospho-D-ribosyl)imidazole-4-carboxamide (10-formyl THF route): step 1/1. The protein operates within purine metabolism; IMP biosynthesis via de novo pathway; IMP from 5-formamido-1-(5-phospho-D-ribosyl)imidazole-4-carboxamide: step 1/1. The sequence is that of Bifunctional purine biosynthesis protein PurH from Staphylococcus saprophyticus subsp. saprophyticus (strain ATCC 15305 / DSM 20229 / NCIMB 8711 / NCTC 7292 / S-41).